The following is a 694-amino-acid chain: Elongation factor G (694 aa).

Positions glutamate 8–threonine 287 constitute a tr-type G domain. Residues alanine 17–threonine 24, aspartate 86–histidine 90, and asparagine 140–aspartate 143 contribute to the GTP site.

Belongs to the TRAFAC class translation factor GTPase superfamily. Classic translation factor GTPase family. EF-G/EF-2 subfamily.

The protein resides in the cytoplasm. Functionally, catalyzes the GTP-dependent ribosomal translocation step during translation elongation. During this step, the ribosome changes from the pre-translocational (PRE) to the post-translocational (POST) state as the newly formed A-site-bound peptidyl-tRNA and P-site-bound deacylated tRNA move to the P and E sites, respectively. Catalyzes the coordinated movement of the two tRNA molecules, the mRNA and conformational changes in the ribosome. The sequence is that of Elongation factor G from Brucella melitensis biotype 2 (strain ATCC 23457).